A 518-amino-acid chain; its full sequence is MASISTPFPISLHPKTVRSKPLKFRVLTRPIKASGSETPDLTVATRTGSKDLPIRNIPGNYGLPIVGPIKDRWDYFYDQGAEEFFKSRIRKYNSTVYRVNMPPGAFIAENPQVVALLDGKSFPVLFDVDKVEKKDLFTGTYMPSTELTGGYRILSYLDPSEPKHEKLKNLLFFLLKSSRNRIFPEFQATYSELFDSLEKELSLKGKADFGGSSDGTAFNFLARAFYGTNPADTKLKADAPGLITKWVLFNLHPLLSIGLPRVIEEPLIHTFSLPPALVKSDYQRLYEFFLESAGEILVEADKLGISREEATHNLLFATCFNTWGGMKILFPNMVKRIGRAGHQVHNRLAEEIRSVIKSNGGELTMGAIEKMELTKSVVYECLRFEPPVTAQYGRAKKDLVIESHDAAFKVKAGEMLYGYQPLATRDPKIFDRADEFVPERFVGEEGEKLLRHVLWSNGPETETPTVGNKQCAGKDFVVLVARLFVIEIFRRYDSFDIEVGTSPLGSSVNFSSLRKASF.

The transit peptide at 1–33 (MASISTPFPISLHPKTVRSKPLKFRVLTRPIKA) directs the protein to the chloroplast. 3 residues coordinate heme b: Lys-133, His-164, and Lys-168. Residues Asn-321 and Thr-389 each coordinate (13S)-hydroperoxy-(9Z,11E)-octadecadienoate. Residues Asn-321 and Thr-389 each coordinate (13S)-hydroperoxy-(9Z,11E,15Z)-octadecatrienoate. Residues Lys-469 and Cys-471 each coordinate heme b.

The protein belongs to the cytochrome P450 family. The cofactor is heme b.

The protein localises to the plastid. It localises to the chloroplast. It is found in the plastoglobule. It carries out the reaction (13S)-hydroperoxy-(9Z,11E,15Z)-octadecatrienoate = (9Z,13S,15Z)-12,13-epoxyoctadeca-9,11,15-trienoate + H2O. The catalysed reaction is (13S)-hydroperoxy-(9Z,11E)-octadecadienoate = (9Z,13S)-12,13-epoxyoctadeca-9,11-dienoate + H2O. Its pathway is lipid metabolism; oxylipin biosynthesis. Its function is as follows. Cytochrome P450 enzyme involved in the biosynthesis of oxylipin jasmonates, important phytohormones acting as growth regulators and signaling molecules for plant defense. Functions as an allene oxide synthase that converts hydroperoxy fatty acids to unstable allene epoxides. Catalyzes the dehydration of 13-HPOTE ((13S)-hydroperoxy-(9Z,11E,15Z)-octadecatrienoate), as well as 13-HPODE ((13S)-hydroperoxy-(9Z,11E)-octadecadienoate). The protein is Allene oxide synthase, chloroplastic (CYP74A) of Arabidopsis thaliana (Mouse-ear cress).